The sequence spans 418 residues: Serpin A3-8 (418 aa).

The first 25 residues, 1–25 (MRAERMSPLLALGLLVSGLCSRVHC), serve as a signal peptide directing secretion. 4 N-linked (GlcNAc...) asparagine glycosylation sites follow: Asn-103, Asn-183, Asn-233, and Asn-268.

It belongs to the serpin family. In terms of assembly, homodimer.

The protein localises to the cytoplasmic vesicle. Its subcellular location is the secretory vesicle. The protein resides in the chromaffin granule. It is found in the secreted. Functionally, serine protease inhibitor. This is Serpin A3-8 from Bos taurus (Bovine).